The primary structure comprises 98 residues: NADH-ubiquinone oxidoreductase chain 4L (98 aa).

Helical transmembrane passes span 1-21 (MPVIYINLIAAFFMAFMGLLI), 29-49 (SLLCLEGMMLSLFILNSTLAL), and 61-81 (IILLVFAACEAALGLSLLVMV).

Belongs to the complex I subunit 4L family. In terms of assembly, core subunit of respiratory chain NADH dehydrogenase (Complex I) which is composed of 45 different subunits.

The protein localises to the mitochondrion inner membrane. It carries out the reaction a ubiquinone + NADH + 5 H(+)(in) = a ubiquinol + NAD(+) + 4 H(+)(out). In terms of biological role, core subunit of the mitochondrial membrane respiratory chain NADH dehydrogenase (Complex I) which catalyzes electron transfer from NADH through the respiratory chain, using ubiquinone as an electron acceptor. Part of the enzyme membrane arm which is embedded in the lipid bilayer and involved in proton translocation. The protein is NADH-ubiquinone oxidoreductase chain 4L (MT-ND4L) of Echinops telfairi (Lesser hedgehog tenrec).